Reading from the N-terminus, the 283-residue chain is MRFFTEIKPLKTYVAEQKREGKIIGFVPTMGYLHDGHLSLVRKAKLQADVVIVSIFVNPLQFGPNEDFAKYPRDLERDLALLQEEGVDCVFAPSAEEMYKEGFSTFVEVNGEITEVMCGKSRPGHFKGVATVVTKLFNIVTPDLAFFGQKDAQQLFIIEKLVRDLNLNVEIVSVPTRREEDGLAMSSRNTYLNPEERKAATILYRALKRGEELVLAGERNPERLKKLIEEFIKTEPLARIDYVEVRSVPDLKAMDVIKGKFIIALAVYIGSTRLIDNFILEVD.

Residue Met30–His37 coordinates ATP. Catalysis depends on His37, which acts as the Proton donor. Gln61 lines the (R)-pantoate pocket. Beta-alanine is bound at residue Gln61. Residue Gly148 to Asp151 coordinates ATP. Residue Gln154 participates in (R)-pantoate binding. Met185–Arg188 is a binding site for ATP.

The protein belongs to the pantothenate synthetase family. Homodimer.

The protein localises to the cytoplasm. The enzyme catalyses (R)-pantoate + beta-alanine + ATP = (R)-pantothenate + AMP + diphosphate + H(+). It functions in the pathway cofactor biosynthesis; (R)-pantothenate biosynthesis; (R)-pantothenate from (R)-pantoate and beta-alanine: step 1/1. In terms of biological role, catalyzes the condensation of pantoate with beta-alanine in an ATP-dependent reaction via a pantoyl-adenylate intermediate. This chain is Pantothenate synthetase, found in Carboxydothermus hydrogenoformans (strain ATCC BAA-161 / DSM 6008 / Z-2901).